The chain runs to 391 residues: S-adenosylmethionine synthase (391 aa).

H14 provides a ligand contact to ATP. Residue D16 coordinates Mg(2+). E42 contacts K(+). L-methionine is bound by residues E55 and Q98. The segment at Q98 to E108 is flexible loop. ATP is bound by residues D172–K174, R238–F239, D247, R253–K254, A270, and K274. D247 contributes to the L-methionine binding site. L-methionine is bound at residue K278.

It belongs to the AdoMet synthase family. In terms of assembly, homotetramer; dimer of dimers. Mg(2+) is required as a cofactor. It depends on K(+) as a cofactor.

The protein localises to the cytoplasm. The catalysed reaction is L-methionine + ATP + H2O = S-adenosyl-L-methionine + phosphate + diphosphate. Its pathway is amino-acid biosynthesis; S-adenosyl-L-methionine biosynthesis; S-adenosyl-L-methionine from L-methionine: step 1/1. Its function is as follows. Catalyzes the formation of S-adenosylmethionine (AdoMet) from methionine and ATP. The overall synthetic reaction is composed of two sequential steps, AdoMet formation and the subsequent tripolyphosphate hydrolysis which occurs prior to release of AdoMet from the enzyme. The protein is S-adenosylmethionine synthase of Clostridium botulinum (strain Langeland / NCTC 10281 / Type F).